The sequence spans 89 residues: Large ribosomal subunit protein bL27 (89 aa).

Residues 1–26 (MAHKKAGGSSKNGRDSNAQRRGVKRF) form a disordered region.

It belongs to the bacterial ribosomal protein bL27 family.

This is Large ribosomal subunit protein bL27 from Maridesulfovibrio salexigens (strain ATCC 14822 / DSM 2638 / NCIMB 8403 / VKM B-1763) (Desulfovibrio salexigens).